Here is a 452-residue protein sequence, read N- to C-terminus: MLCGRPRSSSDNRNFLRERAGLSSAAVQTRIGNSAASRRSPAARPPVPAPPALPRGRPGTEGSTSLSAPAVLVVAVAVVVVVVSAVAWAMANYIHVPPGSPEVPKLNVTVQDQEEHRCREGALSLLQHLRPHWDPQEVTLQLFTDGITNKLIGCYVGNTMEDVVLVRIYGNKTELLVDRDEEVKSFRVLQAHGCAPQLYCTFNNGLCYEFIQGEALDPKHVCNPAIFRLIARQLAKIHAIHAHNGWIPKSNLWLKMGKYFSLIPTGFADEDINKRFLSDIPSSQILQEEMTWMKEILSNLGSPVVLCHNDLLCKNIIYNEKQGDVQFIDYEYSGYNYLAYDIGNHFNEFAGVSDVDYSLYPDRELQSQWLRAYLEAYKEFKGFGTEVTEKEVEILFIQVNQFALASHFFWGLWALIQAKYSTIEFDFLGYAIVRFNQYFKMKPEVTALKVPE.

The tract at residues 26-64 (AVQTRIGNSAASRRSPAARPPVPAPPALPRGRPGTEGST) is disordered. Pro residues predominate over residues 43–53 (ARPPVPAPPAL).

Belongs to the choline/ethanolamine kinase family. Expressed in kidney, liver, placenta, heart, leukocyte, ovary and testis.

It localises to the cytoplasm. The catalysed reaction is ethanolamine + ATP = phosphoethanolamine + ADP + H(+). It participates in phospholipid metabolism; phosphatidylethanolamine biosynthesis; phosphatidylethanolamine from ethanolamine: step 1/3. In terms of biological role, highly specific for ethanolamine phosphorylation. May be a rate-controlling step in phosphatidylethanolamine biosynthesis. The protein is Ethanolamine kinase 1 of Homo sapiens (Human).